A 316-amino-acid chain; its full sequence is Cell division protein FtsQ (316 aa).

Residues 1–34 are disordered; sequence MAKAARRTKSAPARRSPRRHARQTGATIRRPKRP. The Cytoplasmic segment spans residues 1 to 61; the sequence is MAKAARRTKS…HPLLKQMAKR (61 aa). Residues 62–80 traverse the membrane as a helical segment; the sequence is LLLILVIVGFLAGLWAARW. The Periplasmic portion of the chain corresponds to 81–316; the sequence is PQLLATKTGE…AADPLVSDRI (236 aa). Residues 97 to 165 form the POTRA domain; the sequence is FSVRHVEIVG…DTLVVDIVER (69 aa). Positions 295–316 are disordered; it reads PEPVKKATKPAKAADPLVSDRI.

It belongs to the FtsQ/DivIB family. FtsQ subfamily.

The protein localises to the cell inner membrane. Its function is as follows. Essential cell division protein. In Zymomonas mobilis subsp. mobilis (strain ATCC 31821 / ZM4 / CP4), this protein is Cell division protein FtsQ.